The chain runs to 188 residues: Tuftelin (188 aa).

A coiled-coil region spans residues 1-181 (SLRKTVQDLL…DRMEHLIEKQ (181 aa)).

The protein belongs to the tuftelin family. Interacts with TFIP11.

It is found in the secreted. Functionally, involved in the structural organization of the epidermis. Involved in the mineralization and structural organization of enamel. The polypeptide is Tuftelin (TUFT1) (Sus scrofa (Pig)).